Reading from the N-terminus, the 189-residue chain is dCTP deaminase (189 aa).

DCTP-binding positions include 112–117, 136–138, Q157, Y171, and Q181; these read KSTYAR and TLE. E138 functions as the Proton donor/acceptor in the catalytic mechanism.

The protein belongs to the dCTP deaminase family. In terms of assembly, homotrimer.

It catalyses the reaction dCTP + H2O + H(+) = dUTP + NH4(+). The protein operates within pyrimidine metabolism; dUMP biosynthesis; dUMP from dCTP (dUTP route): step 1/2. In terms of biological role, catalyzes the deamination of dCTP to dUTP. The protein is dCTP deaminase of Methylacidiphilum infernorum (isolate V4) (Methylokorus infernorum (strain V4)).